The sequence spans 218 residues: Small ribosomal subunit protein uS3c (218 aa).

The 74-residue stretch at 47-120 (VRTHIKSSSN…KLHIAIEKVA (74 aa)) folds into the KH type-2 domain.

It belongs to the universal ribosomal protein uS3 family. As to quaternary structure, part of the 30S ribosomal subunit.

It localises to the plastid. The protein resides in the chloroplast. This chain is Small ribosomal subunit protein uS3c (rps3), found in Picea abies (Norway spruce).